The primary structure comprises 439 residues: 3-phosphoshikimate 1-carboxyvinyltransferase (439 aa).

The 3-phosphoshikimate site is built by lysine 25, serine 26, and arginine 30. Lysine 25 serves as a coordination point for phosphoenolpyruvate. Phosphoenolpyruvate contacts are provided by glycine 96 and arginine 124. 3-phosphoshikimate-binding residues include serine 170, serine 171, glutamine 172, serine 202, aspartate 324, and lysine 351. Residue glutamine 172 participates in phosphoenolpyruvate binding. Catalysis depends on aspartate 324, which acts as the Proton acceptor. Residues arginine 355, arginine 399, and lysine 424 each coordinate phosphoenolpyruvate.

This sequence belongs to the EPSP synthase family. Monomer.

It is found in the cytoplasm. The enzyme catalyses 3-phosphoshikimate + phosphoenolpyruvate = 5-O-(1-carboxyvinyl)-3-phosphoshikimate + phosphate. It functions in the pathway metabolic intermediate biosynthesis; chorismate biosynthesis; chorismate from D-erythrose 4-phosphate and phosphoenolpyruvate: step 6/7. In terms of biological role, catalyzes the transfer of the enolpyruvyl moiety of phosphoenolpyruvate (PEP) to the 5-hydroxyl of shikimate-3-phosphate (S3P) to produce enolpyruvyl shikimate-3-phosphate and inorganic phosphate. This Bordetella avium (strain 197N) protein is 3-phosphoshikimate 1-carboxyvinyltransferase.